A 549-amino-acid polypeptide reads, in one-letter code: uncharacterized protein (549 aa).

Transmembrane regions (helical) follow at residues isoleucine 27 to valine 47, proline 108 to phenylalanine 128, threonine 146 to alanine 166, alanine 197 to leucine 217, phenylalanine 233 to valine 253, valine 265 to leucine 285, phenylalanine 308 to leucine 328, leucine 352 to valine 372, threonine 399 to glycine 419, leucine 434 to glycine 454, isoleucine 472 to isoleucine 492, and isoleucine 501 to glycine 521.

It is found in the cell membrane. This is an uncharacterized protein from Mycoplasma pneumoniae (strain ATCC 29342 / M129 / Subtype 1) (Mycoplasmoides pneumoniae).